The chain runs to 211 residues: Ribosomal RNA small subunit methyltransferase G (211 aa).

Residues Gly73, Phe78, 124–125 (VE), and Arg137 contribute to the S-adenosyl-L-methionine site.

It belongs to the methyltransferase superfamily. RNA methyltransferase RsmG family.

It is found in the cytoplasm. Specifically methylates the N7 position of a guanine in 16S rRNA. The sequence is that of Ribosomal RNA small subunit methyltransferase G from Christiangramia forsetii (strain DSM 17595 / CGMCC 1.15422 / KT0803) (Gramella forsetii).